The following is a 187-amino-acid chain: dCTP deaminase (187 aa).

DCTP-binding positions include 110–115 (KSTYAR), 134–136 (TLE), Gln155, Tyr169, and Gln179. Catalysis depends on Glu136, which acts as the Proton donor/acceptor.

It belongs to the dCTP deaminase family. In terms of assembly, homotrimer.

The catalysed reaction is dCTP + H2O + H(+) = dUTP + NH4(+). It functions in the pathway pyrimidine metabolism; dUMP biosynthesis; dUMP from dCTP (dUTP route): step 1/2. In terms of biological role, catalyzes the deamination of dCTP to dUTP. This is dCTP deaminase from Bordetella bronchiseptica (strain ATCC BAA-588 / NCTC 13252 / RB50) (Alcaligenes bronchisepticus).